The following is a 103-amino-acid chain: Large ribosomal subunit protein bL21 (103 aa).

Belongs to the bacterial ribosomal protein bL21 family. In terms of assembly, part of the 50S ribosomal subunit. Contacts protein L20.

Its function is as follows. This protein binds to 23S rRNA in the presence of protein L20. In Wolinella succinogenes (strain ATCC 29543 / DSM 1740 / CCUG 13145 / JCM 31913 / LMG 7466 / NCTC 11488 / FDC 602W) (Vibrio succinogenes), this protein is Large ribosomal subunit protein bL21.